The primary structure comprises 132 residues: Large ribosomal subunit protein eL28 (132 aa).

Belongs to the eukaryotic ribosomal protein eL28 family.

This chain is Large ribosomal subunit protein eL28 (rpl28), found in Dictyostelium discoideum (Social amoeba).